The sequence spans 113 residues: Large ribosomal subunit protein bL19 (113 aa).

Belongs to the bacterial ribosomal protein bL19 family.

In terms of biological role, this protein is located at the 30S-50S ribosomal subunit interface and may play a role in the structure and function of the aminoacyl-tRNA binding site. The sequence is that of Large ribosomal subunit protein bL19 from Rhodococcus jostii (strain RHA1).